The chain runs to 321 residues: Probable protein phosphatase methylesterase 1 (321 aa).

Active-site residues include Ser-170, Asp-195, and His-307.

It belongs to the AB hydrolase superfamily.

The enzyme catalyses [phosphatase 2A protein]-C-terminal L-leucine methyl ester + H2O = [phosphatase 2A protein]-C-terminal L-leucine + methanol + H(+). Functionally, demethylates proteins that have been reversibly carboxymethylated. The polypeptide is Probable protein phosphatase methylesterase 1 (ppme1) (Dictyostelium discoideum (Social amoeba)).